The chain runs to 225 residues: Cell division protein SepF (225 aa).

The segment at 22–116 (EYLDEPEPAR…TRGALAVDTR (95 aa)) is disordered. Composition is skewed to basic and acidic residues over residues 28–54 (EPARRPARPARDSGRDPYLDRDDRDFA) and 77–86 (RYDGPRHSSR).

This sequence belongs to the SepF family. Homodimer. Interacts with FtsZ.

It localises to the cytoplasm. Functionally, cell division protein that is part of the divisome complex and is recruited early to the Z-ring. Probably stimulates Z-ring formation, perhaps through the cross-linking of FtsZ protofilaments. Its function overlaps with FtsA. The sequence is that of Cell division protein SepF from Rhodococcus jostii (strain RHA1).